The chain runs to 58 residues: Small integral membrane protein 11 (58 aa).

The helical transmembrane segment at 10-32 threads the bilayer; it reads PLLLYILAAKTLILCLTFAGVKM. Residues 29 to 58 are a coiled coil; sequence GVKMYQRKRLEAKQQKLEAERKKQSEKKDN.

In terms of tissue distribution, expressed in heart, spleen, liver, stomach, muscle, lung, testis, skin, PBL and bone marrow.

Its subcellular location is the membrane. The protein is Small integral membrane protein 11 of Homo sapiens (Human).